Reading from the N-terminus, the 184-residue chain is MIRELEYYGSPTLRRKAEAILEITDEIRQLAQDMYETMVAHKGVGLAAPQVGESVSLFVMCVEGETEDGDLIFCDFPKVYINPVLSNVSEDLVLGREGCLSIPGLRADVYRPRSITVKAINLDGQEFTEHLEGFPARIVMHENDHLNGILYIDKMEEPKDYKKFKSALEKIRRRYNNHITDKAS.

The Fe cation site is built by Cys-99 and His-141. Residue Glu-142 is part of the active site. His-145 contacts Fe cation.

This sequence belongs to the polypeptide deformylase family. Requires Fe(2+) as cofactor.

It catalyses the reaction N-terminal N-formyl-L-methionyl-[peptide] + H2O = N-terminal L-methionyl-[peptide] + formate. Functionally, removes the formyl group from the N-terminal Met of newly synthesized proteins. Requires at least a dipeptide for an efficient rate of reaction. N-terminal L-methionine is a prerequisite for activity but the enzyme has broad specificity at other positions. This Chlamydia abortus (strain DSM 27085 / S26/3) (Chlamydophila abortus) protein is Peptide deformylase.